The chain runs to 147 residues: Hemoglobin subunit delta (147 aa).

Positions 3–147 (HLTPEEKTAV…VANALAHKYH (145 aa)) constitute a Globin domain. At S51 the chain carries Phosphoserine. Residues H64 and H93 each contribute to the heme b site.

Belongs to the globin family. As to quaternary structure, heterotetramer of two delta chains and two alpha chains. In terms of tissue distribution, red blood cells.

The polypeptide is Hemoglobin subunit delta (HBD) (Gorilla gorilla gorilla (Western lowland gorilla)).